Here is a 555-residue protein sequence, read N- to C-terminus: Membrane protein insertase YidC (555 aa).

A helical membrane pass occupies residues 7-24; sequence ILWVIFSMSLVLLYDNWQ. Low complexity-rich tracts occupy residues 40 to 54 and 64 to 81; these read QQAA…TPQA and AAPG…QPVG. Residues 40–81 form a disordered region; that stretch reads QQAAPAGAGGATPQADVPKANATNAAPGTVPAAPQAAAQPVG. The next 5 membrane-spanning stretches (helical) occupy residues 334-354, 360-380, 430-450, 468-488, and 503-523; these read LELV…FWLL, FLGN…LVFF, LGGC…YWVL, LSVP…MFVQ, and VMMI…AGLV.

Belongs to the OXA1/ALB3/YidC family. Type 1 subfamily. In terms of assembly, interacts with the Sec translocase complex via SecD. Specifically interacts with transmembrane segments of nascent integral membrane proteins during membrane integration.

The protein localises to the cell inner membrane. In terms of biological role, required for the insertion and/or proper folding and/or complex formation of integral membrane proteins into the membrane. Involved in integration of membrane proteins that insert both dependently and independently of the Sec translocase complex, as well as at least some lipoproteins. Aids folding of multispanning membrane proteins. This Cupriavidus metallidurans (strain ATCC 43123 / DSM 2839 / NBRC 102507 / CH34) (Ralstonia metallidurans) protein is Membrane protein insertase YidC.